A 213-amino-acid chain; its full sequence is Isopentenyl-diphosphate Delta-isomerase (213 aa).

Basic and acidic residues predominate over residues M1–R10. Residues M1 to A34 are disordered. Positions 51, 58, and 95 each coordinate Mn(2+). One can recognise a Nudix hydrolase domain in the interval V56 to E193. E113 contributes to the Mg(2+) binding site. Positions 142 and 144 each coordinate Mn(2+). E144 is a catalytic residue.

Belongs to the IPP isomerase type 1 family. Mg(2+) serves as cofactor. Requires Mn(2+) as cofactor.

The protein resides in the cytoplasm. It catalyses the reaction isopentenyl diphosphate = dimethylallyl diphosphate. It functions in the pathway isoprenoid biosynthesis; dimethylallyl diphosphate biosynthesis; dimethylallyl diphosphate from isopentenyl diphosphate: step 1/1. Functionally, catalyzes the 1,3-allylic rearrangement of the homoallylic substrate isopentenyl (IPP) to its highly electrophilic allylic isomer, dimethylallyl diphosphate (DMAPP). This chain is Isopentenyl-diphosphate Delta-isomerase, found in Halobacterium salinarum (strain ATCC 700922 / JCM 11081 / NRC-1) (Halobacterium halobium).